The sequence spans 425 residues: Trigger factor (425 aa).

One can recognise a PPIase FKBP-type domain in the interval 163 to 248 (GDTAVIDFEG…IHEIKTKELP (86 aa)).

Belongs to the FKBP-type PPIase family. Tig subfamily.

The protein resides in the cytoplasm. It catalyses the reaction [protein]-peptidylproline (omega=180) = [protein]-peptidylproline (omega=0). Functionally, involved in protein export. Acts as a chaperone by maintaining the newly synthesized protein in an open conformation. Functions as a peptidyl-prolyl cis-trans isomerase. This chain is Trigger factor, found in Bacillus mycoides (strain KBAB4) (Bacillus weihenstephanensis).